The sequence spans 133 residues: Profilin-2 (133 aa).

Cys13 and Cys117 are joined by a disulfide. The short motif at 83–99 (AVIRGKKGSGGITIKKT) is the Involved in PIP2 interaction element. At Thr113 the chain carries Phosphothreonine.

The protein belongs to the profilin family. In terms of assembly, occurs in many kinds of cells as a complex with monomeric actin in a 1:1 ratio. Post-translationally, phosphorylated by MAP kinases.

Its subcellular location is the cytoplasm. It is found in the cytoskeleton. Binds to actin and affects the structure of the cytoskeleton. At high concentrations, profilin prevents the polymerization of actin, whereas it enhances it at low concentrations. The sequence is that of Profilin-2 from Corylus avellana (European hazel).